The primary structure comprises 308 residues: N-acetylneuraminate lyase (308 aa).

Residues Thr50 and Thr51 each coordinate aceneuramate. Tyr142 acts as the Proton donor in catalysis. Lys172 (schiff-base intermediate with substrate) is an active-site residue. Aceneuramate is bound by residues Ser174, Gly198, Asp200, Glu201, and Ser217.

It belongs to the DapA family. NanA subfamily. In terms of assembly, homotetramer.

It localises to the cytoplasm. The catalysed reaction is aceneuramate = aldehydo-N-acetyl-D-mannosamine + pyruvate. It participates in amino-sugar metabolism; N-acetylneuraminate degradation. In terms of biological role, catalyzes the cleavage of N-acetylneuraminic acid (sialic acid) to form pyruvate and N-acetylmannosamine via a Schiff base intermediate. It prevents sialic acids from being recycled and returning to the cell surface. Involved in the N-glycolylneuraminic acid (Neu5Gc) degradation pathway. The sequence is that of N-acetylneuraminate lyase from Gallus gallus (Chicken).